Consider the following 201-residue polypeptide: 3-isopropylmalate dehydratase small subunit (201 aa).

This sequence belongs to the LeuD family. LeuD type 1 subfamily. As to quaternary structure, heterodimer of LeuC and LeuD.

The catalysed reaction is (2R,3S)-3-isopropylmalate = (2S)-2-isopropylmalate. It participates in amino-acid biosynthesis; L-leucine biosynthesis; L-leucine from 3-methyl-2-oxobutanoate: step 2/4. Its function is as follows. Catalyzes the isomerization between 2-isopropylmalate and 3-isopropylmalate, via the formation of 2-isopropylmaleate. The polypeptide is 3-isopropylmalate dehydratase small subunit (Salmonella arizonae (strain ATCC BAA-731 / CDC346-86 / RSK2980)).